The following is a 244-amino-acid chain: tRNA (guanine-N(1)-)-methyltransferase (244 aa).

Residues G113 and 133 to 138 (IGDYVL) contribute to the S-adenosyl-L-methionine site.

This sequence belongs to the RNA methyltransferase TrmD family. Homodimer.

The protein resides in the cytoplasm. It catalyses the reaction guanosine(37) in tRNA + S-adenosyl-L-methionine = N(1)-methylguanosine(37) in tRNA + S-adenosyl-L-homocysteine + H(+). Specifically methylates guanosine-37 in various tRNAs. The sequence is that of tRNA (guanine-N(1)-)-methyltransferase from Bacillus anthracis (strain A0248).